The following is a 305-amino-acid chain: MVNVDEFIEEAKAEIAEEIGDKHAVIGLSGGVDSSTAAALAYEAIGDQLTAVYVDTGLMRKGETDEIRETFDYMDSLRIVEAQDRFLDELEGETDPEEKRHIIGEQFIREFETVAREVDADYLVQGTIYPDRIESEGTIKSHHNVGGLPERIDFDGIVEPMRDLYKDEVREVARALDLEEIISERMPFPGPGLAVRIIGEVTEEKLAVAREANHVVEEELEEYEPWQALAAVIGKATGVKGDNRVHGWVVAVRSVESRDGMTARAQELDWDTLQRMQSRITGAHENVARVVYDVTHKPPATIEYE.

One can recognise a GMPS ATP-PPase domain in the interval Val2 to Arg185. Position 29-35 (Ser29–Ser35) interacts with ATP.

In terms of assembly, heterodimer composed of a glutamine amidotransferase subunit (A) and a GMP-binding subunit (B).

The catalysed reaction is XMP + L-glutamine + ATP + H2O = GMP + L-glutamate + AMP + diphosphate + 2 H(+). The protein operates within purine metabolism; GMP biosynthesis; GMP from XMP (L-Gln route): step 1/1. Catalyzes the synthesis of GMP from XMP. This chain is GMP synthase [glutamine-hydrolyzing] subunit B, found in Haloarcula marismortui (strain ATCC 43049 / DSM 3752 / JCM 8966 / VKM B-1809) (Halobacterium marismortui).